We begin with the raw amino-acid sequence, 928 residues long: Serine/threonine-protein kinase atg1 (928 aa).

Positions tyrosine 6 to isoleucine 315 constitute a Protein kinase domain. ATP-binding positions include isoleucine 12–valine 20 and lysine 35. The Proton acceptor role is filled by aspartate 149. Disordered stretches follow at residues proline 318–arginine 470 and phenylalanine 544–alanine 571. Basic and acidic residues predominate over residues threonine 359 to tyrosine 371. The segment covering threonine 437 to glutamate 452 has biased composition (polar residues). Composition is skewed to basic and acidic residues over residues glutamine 459–arginine 470 and serine 548–tyrosine 564.

This sequence belongs to the protein kinase superfamily. Ser/Thr protein kinase family. APG1/unc-51/ULK1 subfamily. In terms of assembly, homodimer. Forms a ternary complex with ATG13 and ATG17.

It localises to the cytoplasm. The protein localises to the preautophagosomal structure membrane. The enzyme catalyses L-seryl-[protein] + ATP = O-phospho-L-seryl-[protein] + ADP + H(+). It catalyses the reaction L-threonyl-[protein] + ATP = O-phospho-L-threonyl-[protein] + ADP + H(+). Functionally, serine/threonine protein kinase involved in the cytoplasm to vacuole transport (Cvt) and found to be essential in autophagy, where it is required for the formation of autophagosomes. Involved in the clearance of protein aggregates which cannot be efficiently cleared by the proteasome. Required for selective autophagic degradation of the nucleus (nucleophagy) as well as for mitophagy which contributes to regulate mitochondrial quantity and quality by eliminating the mitochondria to a basal level to fulfill cellular energy requirements and preventing excess ROS production. Also involved in endoplasmic reticulum-specific autophagic process, in selective removal of ER-associated degradation (ERAD) substrates. Plays a key role in ATG9 and ATG23 cycling through the pre-autophagosomal structure and is necessary to promote ATG18 binding to ATG9 through phosphorylation of ATG9. Catalyzes phosphorylation of ATG4, decreasing the interaction between ATG4 and ATG8 and impairing deconjugation of PE-conjugated forms of ATG8. In Aspergillus clavatus (strain ATCC 1007 / CBS 513.65 / DSM 816 / NCTC 3887 / NRRL 1 / QM 1276 / 107), this protein is Serine/threonine-protein kinase atg1.